The primary structure comprises 208 residues: Imidazole glycerol phosphate synthase subunit HisH (208 aa).

Residues 1-206 (MIVIIDYDTG…KEVTYSCKSS (206 aa)) form the Glutamine amidotransferase type-1 domain. Cys79 serves as the catalytic Nucleophile. Residues His181 and Glu183 contribute to the active site.

As to quaternary structure, heterodimer of HisH and HisF.

Its subcellular location is the cytoplasm. It catalyses the reaction 5-[(5-phospho-1-deoxy-D-ribulos-1-ylimino)methylamino]-1-(5-phospho-beta-D-ribosyl)imidazole-4-carboxamide + L-glutamine = D-erythro-1-(imidazol-4-yl)glycerol 3-phosphate + 5-amino-1-(5-phospho-beta-D-ribosyl)imidazole-4-carboxamide + L-glutamate + H(+). The catalysed reaction is L-glutamine + H2O = L-glutamate + NH4(+). It functions in the pathway amino-acid biosynthesis; L-histidine biosynthesis; L-histidine from 5-phospho-alpha-D-ribose 1-diphosphate: step 5/9. Its function is as follows. IGPS catalyzes the conversion of PRFAR and glutamine to IGP, AICAR and glutamate. The HisH subunit catalyzes the hydrolysis of glutamine to glutamate and ammonia as part of the synthesis of IGP and AICAR. The resulting ammonia molecule is channeled to the active site of HisF. The sequence is that of Imidazole glycerol phosphate synthase subunit HisH from Listeria monocytogenes serotype 4a (strain HCC23).